Reading from the N-terminus, the 335-residue chain is Glyceraldehyde-3-phosphate dehydrogenase (335 aa).

Residues 12 to 13 (RI), aspartate 34, and arginine 79 contribute to the NAD(+) site. D-glyceraldehyde 3-phosphate-binding positions include 150 to 152 (SCT), threonine 181, 210 to 211 (TG), and arginine 233. Residue cysteine 151 is the Nucleophile of the active site. Asparagine 315 provides a ligand contact to NAD(+).

The protein belongs to the glyceraldehyde-3-phosphate dehydrogenase family. In terms of assembly, homotetramer.

The protein localises to the cytoplasm. The catalysed reaction is D-glyceraldehyde 3-phosphate + phosphate + NAD(+) = (2R)-3-phospho-glyceroyl phosphate + NADH + H(+). Its pathway is carbohydrate degradation; glycolysis; pyruvate from D-glyceraldehyde 3-phosphate: step 1/5. The protein is Glyceraldehyde-3-phosphate dehydrogenase (GPD) of Ogataea parapolymorpha (strain ATCC 26012 / BCRC 20466 / JCM 22074 / NRRL Y-7560 / DL-1) (Yeast).